Consider the following 141-residue polypeptide: Large ribosomal subunit protein uL16 (141 aa).

The segment at 1-23 (MLMPKRTKYRKQMKGRNRGKAHR) is disordered.

Belongs to the universal ribosomal protein uL16 family. As to quaternary structure, part of the 50S ribosomal subunit.

In terms of biological role, binds 23S rRNA and is also seen to make contacts with the A and possibly P site tRNAs. In Helicobacter pylori (strain P12), this protein is Large ribosomal subunit protein uL16.